We begin with the raw amino-acid sequence, 102 residues long: MVQIVSQDNFADSIASGLVLVDFFAEWCGPCKMLTPVLEALAAELPYVTILKLDIDASPRPAEQFGVSSIPTLILFKDGKEVERSVGLKDKDSLVKLISKHQ.

The Thioredoxin domain occupies 1–102; that stretch reads MVQIVSQDNF…SLVKLISKHQ (102 aa). Cysteines 28 and 31 form a disulfide.

It belongs to the thioredoxin family.

Functionally, participates in various redox reactions through the reversible oxidation of its active center dithiol to a disulfide and catalyzes dithiol-disulfide exchange reactions. This is Thioredoxin (trxA) from Chlamydia muridarum (strain MoPn / Nigg).